We begin with the raw amino-acid sequence, 221 residues long: Probable septum site-determining protein MinC (221 aa).

This sequence belongs to the MinC family. Interacts with MinD and FtsZ.

Cell division inhibitor that blocks the formation of polar Z ring septums. Rapidly oscillates between the poles of the cell to destabilize FtsZ filaments that have formed before they mature into polar Z rings. Prevents FtsZ polymerization. The polypeptide is Probable septum site-determining protein MinC (Aliivibrio fischeri (strain ATCC 700601 / ES114) (Vibrio fischeri)).